The following is a 1297-amino-acid chain: DNA-directed RNA polymerase subunit beta' (1297 aa).

The Zn(2+) site is built by Cys60, Cys62, Cys75, and Cys78. Mg(2+) contacts are provided by Asp535, Asp537, and Asp539. Zn(2+) is bound by residues Cys883, Cys961, Cys968, and Cys971.

It belongs to the RNA polymerase beta' chain family. The RNAP catalytic core consists of 2 alpha, 1 beta, 1 beta' and 1 omega subunit. When a sigma factor is associated with the core the holoenzyme is formed, which can initiate transcription. It depends on Mg(2+) as a cofactor. Zn(2+) is required as a cofactor.

The catalysed reaction is RNA(n) + a ribonucleoside 5'-triphosphate = RNA(n+1) + diphosphate. Its function is as follows. DNA-dependent RNA polymerase catalyzes the transcription of DNA into RNA using the four ribonucleoside triphosphates as substrates. This chain is DNA-directed RNA polymerase subunit beta', found in Salinispora tropica (strain ATCC BAA-916 / DSM 44818 / JCM 13857 / NBRC 105044 / CNB-440).